The chain runs to 288 residues: Nucleotide-binding protein AHA_3920 (288 aa).

Position 8 to 15 (8 to 15) interacts with ATP; that stretch reads GRSGSGKT. 56–59 serves as a coordination point for GTP; sequence DVRN.

The protein belongs to the RapZ-like family.

Displays ATPase and GTPase activities. The chain is Nucleotide-binding protein AHA_3920 from Aeromonas hydrophila subsp. hydrophila (strain ATCC 7966 / DSM 30187 / BCRC 13018 / CCUG 14551 / JCM 1027 / KCTC 2358 / NCIMB 9240 / NCTC 8049).